Reading from the N-terminus, the 125-residue chain is MORF4 family-associated protein 1 (125 aa).

A disordered region spans residues 76–99 (ESALNHLQGAGGAEPRGPRAEKAD). Residues 94–124 (RAEKADEKAQEMAKMAEMLVQLVRRIEKSES) adopt a coiled-coil conformation.

It belongs to the MORF4 family-associated protein family. Found in a complex composed of MORF4L1, MRFAP1 and RB1. Interacts via its N-terminus with MORF4L1. Interacts with CSTB and MORF4L2.

It localises to the nucleus. The protein localises to the cytoplasm. Its subcellular location is the perinuclear region. The chain is MORF4 family-associated protein 1 from Rattus norvegicus (Rat).